The primary structure comprises 545 residues: CTP synthase (545 aa).

The segment at 1-266 (MTTNYIFVTG…DDYICKRFGL (266 aa)) is amidoligase domain. Ser14 contributes to the CTP binding site. Residue Ser14 participates in UTP binding. Residues 15-20 (SLGKGI) and Asp72 each bind ATP. Mg(2+)-binding residues include Asp72 and Glu140. CTP is bound by residues 147 to 149 (DIE), 187 to 192 (KTKPTQ), and Lys223. Residues 187–192 (KTKPTQ) and Lys223 each bind UTP. 239 to 241 (KDV) serves as a coordination point for ATP. A Glutamine amidotransferase type-1 domain is found at 291–542 (TIGMVGKYIA…VKAAGEYQKR (252 aa)). Gly352 lines the L-glutamine pocket. Residue Cys379 is the Nucleophile; for glutamine hydrolysis of the active site. L-glutamine-binding positions include 380–383 (LGMQ), Glu403, and Arg470. Catalysis depends on residues His515 and Glu517.

It belongs to the CTP synthase family. In terms of assembly, homotetramer.

It carries out the reaction UTP + L-glutamine + ATP + H2O = CTP + L-glutamate + ADP + phosphate + 2 H(+). The enzyme catalyses L-glutamine + H2O = L-glutamate + NH4(+). The catalysed reaction is UTP + NH4(+) + ATP = CTP + ADP + phosphate + 2 H(+). Its pathway is pyrimidine metabolism; CTP biosynthesis via de novo pathway; CTP from UDP: step 2/2. Its activity is regulated as follows. Allosterically activated by GTP, when glutamine is the substrate; GTP has no effect on the reaction when ammonia is the substrate. The allosteric effector GTP functions by stabilizing the protein conformation that binds the tetrahedral intermediate(s) formed during glutamine hydrolysis. Inhibited by the product CTP, via allosteric rather than competitive inhibition. Its function is as follows. Catalyzes the ATP-dependent amination of UTP to CTP with either L-glutamine or ammonia as the source of nitrogen. Regulates intracellular CTP levels through interactions with the four ribonucleotide triphosphates. This is CTP synthase from Sodalis glossinidius (strain morsitans).